The primary structure comprises 591 residues: Aspartate--tRNA(Asp/Asn) ligase (591 aa).

Glu174 lines the L-aspartate pocket. The interval 198 to 201 (QLFK) is aspartate. Arg220 serves as a coordination point for L-aspartate. Residues 220-222 (RDE) and Gln229 each bind ATP. L-aspartate is bound at residue His450. Residue Glu483 participates in ATP binding. Residue Arg490 coordinates L-aspartate. 535 to 538 (GLDR) lines the ATP pocket.

It belongs to the class-II aminoacyl-tRNA synthetase family. Type 1 subfamily. As to quaternary structure, homodimer.

The protein localises to the cytoplasm. It carries out the reaction tRNA(Asx) + L-aspartate + ATP = L-aspartyl-tRNA(Asx) + AMP + diphosphate. Its function is as follows. Aspartyl-tRNA synthetase with relaxed tRNA specificity since it is able to aspartylate not only its cognate tRNA(Asp) but also tRNA(Asn). Reaction proceeds in two steps: L-aspartate is first activated by ATP to form Asp-AMP and then transferred to the acceptor end of tRNA(Asp/Asn). In Pseudomonas syringae pv. tomato (strain ATCC BAA-871 / DC3000), this protein is Aspartate--tRNA(Asp/Asn) ligase.